A 745-amino-acid polypeptide reads, in one-letter code: uncharacterized protein (745 aa).

The 99-residue stretch at N158–D256 folds into the HTH araC/xylS-type domain. 2 consecutive DNA-binding regions (H-T-H motif) follow at residues S175 to L196 and I223 to T246.

This is an uncharacterized protein from Staphylococcus aureus.